A 406-amino-acid polypeptide reads, in one-letter code: Argininosuccinate synthase (406 aa).

ATP-binding positions include 12–20 (AYSGGLDTS) and alanine 39. Positions 90 and 95 each coordinate L-citrulline. Glycine 120 is a binding site for ATP. L-aspartate-binding residues include threonine 122, asparagine 126, and aspartate 127. Residue asparagine 126 coordinates L-citrulline. Arginine 130, serine 179, serine 188, glutamate 264, and tyrosine 276 together coordinate L-citrulline.

The protein belongs to the argininosuccinate synthase family. Type 1 subfamily. Homotetramer.

The protein localises to the cytoplasm. The enzyme catalyses L-citrulline + L-aspartate + ATP = 2-(N(omega)-L-arginino)succinate + AMP + diphosphate + H(+). It participates in amino-acid biosynthesis; L-arginine biosynthesis; L-arginine from L-ornithine and carbamoyl phosphate: step 2/3. This is Argininosuccinate synthase from Geobacter sp. (strain M21).